Reading from the N-terminus, the 913-residue chain is MSQAPLVLVDGSSYLYRAFHALPPLTTSTGKPTGAVKGVLNMLLSLRKQYPDSPFAVVFDAKGPTFRDELFAEYKANRPSMPDDLRVQVEPLHASVRALGLPLLCVEGVEADDVIGTLARSSAAADRPVVISTGDKDMAQLVDGHITLVNTMTGSRLDVDGVKEKFGVGPELIIDFLALMGDKVDNIPGVPGVGEKTALGLLTGVGGGLEVLYASLDKVPELPIRGAKGLPAKLEENREQAFLSYQLATIKTDVELDVEIDKLYPGEPQREALIALYRELEFKNWLDDLLREAKEAGENGEAETPIQAEVDYDVVLDQAGFDAWLKKLEEAELIAFDTETTSIDAQQAQVVGVSFAVKEGEAAYVPLAHSYMGVPEQLDRDAVLRALKPLLEDPKKLKVGQHAKYDINVLANASTPIALRGVAYDTMLESYVLDSTATRHDMDSLALKYLGHSTIRFEDIAGKGAKQLTFDQIAIEQAGPYAAEDADVTLRLHQALWQKLEAIPSLARVLTDIEMPLVPVLARIERNGALVDANLLGIQSRELGEKMVALERQAYDLAGQEFNLGSPKQLGAILYDKLGLPVLSKTATGQPSTAEAVLAELAEQDFELPKVIMQYRSMSKLKSTYTDRLPEQINPRTGRIHTSYHQAVAATGRLSSSDPNLQNIPIRTAEGRRIRQAFVAPQGYKLLAADYSQIELRIMAHLAKDDGLLDAFRHDLDVHRATAAEVFGVPLEDVSGDQRRSAKAINFGLIYGMSAFGLAKQIGVERKEAQAYIDRYFARYPGVLAYMERTRAQAAEQGFVETLFGRRLYLPEIHSKNGAMRKAAERTAINAPMQGTAADIMKRAMVAVDNWLQESGLDARVILQVHDELVLEVREDLVEQVCEGIRPLMSGAATLDVPLVVEAGVGSNWDEAH.

Residues 1–305 (MSQAPLVLVD…AGENGEAETP (305 aa)) form the 5'-3' exonuclease domain. Residues 306–501 (IQAEVDYDVV…LHQALWQKLE (196 aa)) form the 3'-5' exonuclease domain. The polymerase stretch occupies residues 505-913 (SLARVLTDIE…GVGSNWDEAH (409 aa)).

Belongs to the DNA polymerase type-A family. As to quaternary structure, single-chain monomer with multiple functions.

It carries out the reaction DNA(n) + a 2'-deoxyribonucleoside 5'-triphosphate = DNA(n+1) + diphosphate. In terms of biological role, in addition to polymerase activity, this DNA polymerase exhibits 3'-5' and 5'-3' exonuclease activity. The polypeptide is DNA polymerase I (polA) (Pseudomonas aeruginosa (strain ATCC 15692 / DSM 22644 / CIP 104116 / JCM 14847 / LMG 12228 / 1C / PRS 101 / PAO1)).